The chain runs to 486 residues: Citrate synthase 3, mitochondrial (486 aa).

The transit peptide at 1-23 directs the protein to the mitochondrion; sequence MVQRLLPGAHICRRSFNSSAIIK. Active-site residues include histidine 315, histidine 361, and aspartate 419. The Microbody targeting signal motif lies at 484–486; sequence NKL.

It belongs to the citrate synthase family.

The protein localises to the mitochondrion. It carries out the reaction oxaloacetate + acetyl-CoA + H2O = citrate + CoA + H(+). It functions in the pathway carbohydrate metabolism; tricarboxylic acid cycle; isocitrate from oxaloacetate: step 1/2. In terms of biological role, dual specificity mitochondrial citrate and methylcitrate synthase with similar catalytic efficiency with both acetyl-CoA and propionyl-CoA. This is Citrate synthase 3, mitochondrial from Saccharomyces cerevisiae (strain ATCC 204508 / S288c) (Baker's yeast).